A 561-amino-acid polypeptide reads, in one-letter code: MRLWKSMAWGILLWHSQSGALCPAWPPARAAEEIARLQQQLADWNDIYWKQGVSAVDDSVYDQLSARLVQWQRCVGQDVSSTPVSPPLNGTTMHPVAHTGVRKLADRQAVEQWMRGRSELWVQPKVDGVAVTLLYQNGKLARAISRGNGLQGEDWTPKIRLIPSIPQSTQGALANAVLQGEIFLQREGHIQQRMGGMNARSKVAGMLMRQDNASALNSLGIFIWAWPDGPANMPERLSQLAKAGFSLTKKYSLVVKDASEVERARQSWLTSALPFVTDGVVIRMAKEPASQYWRPGQGDWLAAWKYPPVAQVAQVSAIQFSVGKSGKITVVASLVPVILDDKRVQRVNIGSVKRWEAWDIAPGDQILVSLAGQGIPRLDEVVWRSRERSKPVPPDSHFNSLTCFYASETCQEQFISRLVWLGSRSALGLDGMGEASWRALHQTHRFEHIFSWLALTSAQIANTPGFAKGKSEQIWRQFNLARRQPFTRWIMAMDIPLTQAALQASGDRSWEQLLMRTEQHWRQLPATGERRAGRVIDWRDNPQIKTLSRWLAAQHIPGFGS.

Residue K125 is the N6-AMP-lysine intermediate of the active site.

It belongs to the NAD-dependent DNA ligase family. LigB subfamily.

It carries out the reaction NAD(+) + (deoxyribonucleotide)n-3'-hydroxyl + 5'-phospho-(deoxyribonucleotide)m = (deoxyribonucleotide)n+m + AMP + beta-nicotinamide D-nucleotide.. In terms of biological role, catalyzes the formation of phosphodiester linkages between 5'-phosphoryl and 3'-hydroxyl groups in double-stranded DNA using NAD as a coenzyme and as the energy source for the reaction. This Salmonella heidelberg (strain SL476) protein is DNA ligase B.